The chain runs to 1091 residues: ATP-dependent helicase/deoxyribonuclease subunit B (1091 aa).

This sequence belongs to the helicase family. AddB/RexB type 2 subfamily. Heterodimer of AddA and RexB. Requires Mg(2+) as cofactor.

The heterodimer acts as both an ATP-dependent DNA helicase and an ATP-dependent, dual-direction single-stranded exonuclease. Recognizes the chi site generating a DNA molecule suitable for the initiation of homologous recombination. This subunit has 5' -&gt; 3' nuclease activity but not helicase activity. This Streptococcus pneumoniae (strain CGSP14) protein is ATP-dependent helicase/deoxyribonuclease subunit B.